The following is a 206-amino-acid chain: Dephospho-CoA kinase (206 aa).

Positions 4-204 (IVGLTGGIGS…QFYLQQAENK (201 aa)) constitute a DPCK domain. 12 to 17 (GSGKTT) lines the ATP pocket.

It belongs to the CoaE family.

The protein resides in the cytoplasm. The enzyme catalyses 3'-dephospho-CoA + ATP = ADP + CoA + H(+). It functions in the pathway cofactor biosynthesis; coenzyme A biosynthesis; CoA from (R)-pantothenate: step 5/5. Its function is as follows. Catalyzes the phosphorylation of the 3'-hydroxyl group of dephosphocoenzyme A to form coenzyme A. The sequence is that of Dephospho-CoA kinase from Haemophilus influenzae (strain 86-028NP).